A 409-amino-acid chain; its full sequence is Tryptophan synthase beta chain (409 aa).

Position 95 is an N6-(pyridoxal phosphate)lysine (Lys-95).

The protein belongs to the TrpB family. As to quaternary structure, tetramer of two alpha and two beta chains. Pyridoxal 5'-phosphate is required as a cofactor.

The enzyme catalyses (1S,2R)-1-C-(indol-3-yl)glycerol 3-phosphate + L-serine = D-glyceraldehyde 3-phosphate + L-tryptophan + H2O. It functions in the pathway amino-acid biosynthesis; L-tryptophan biosynthesis; L-tryptophan from chorismate: step 5/5. Its function is as follows. The beta subunit is responsible for the synthesis of L-tryptophan from indole and L-serine. The protein is Tryptophan synthase beta chain of Pseudomonas syringae pv. tomato (strain ATCC BAA-871 / DC3000).